A 296-amino-acid chain; its full sequence is Lipoyl synthase (296 aa).

[4Fe-4S] cluster contacts are provided by Cys38, Cys43, Cys49, Cys64, Cys68, Cys71, and Ser279. Residues 50-268 enclose the Radical SAM core domain; the sequence is WDGGCLTFMV…AEYGRSLGFK (219 aa).

It belongs to the radical SAM superfamily. Lipoyl synthase family. It depends on [4Fe-4S] cluster as a cofactor.

Its subcellular location is the cytoplasm. It catalyses the reaction [[Fe-S] cluster scaffold protein carrying a second [4Fe-4S](2+) cluster] + N(6)-octanoyl-L-lysyl-[protein] + 2 oxidized [2Fe-2S]-[ferredoxin] + 2 S-adenosyl-L-methionine + 4 H(+) = [[Fe-S] cluster scaffold protein] + N(6)-[(R)-dihydrolipoyl]-L-lysyl-[protein] + 4 Fe(3+) + 2 hydrogen sulfide + 2 5'-deoxyadenosine + 2 L-methionine + 2 reduced [2Fe-2S]-[ferredoxin]. It participates in protein modification; protein lipoylation via endogenous pathway; protein N(6)-(lipoyl)lysine from octanoyl-[acyl-carrier-protein]: step 2/2. In terms of biological role, catalyzes the radical-mediated insertion of two sulfur atoms into the C-6 and C-8 positions of the octanoyl moiety bound to the lipoyl domains of lipoate-dependent enzymes, thereby converting the octanoylated domains into lipoylated derivatives. The sequence is that of Lipoyl synthase from Methanocella arvoryzae (strain DSM 22066 / NBRC 105507 / MRE50).